Here is a 546-residue protein sequence, read N- to C-terminus: MATTQAQIQRPIANFSPSLWGDQFIKNDPGAKAAEKHCKAVEELKKEVMNMITAAGSNLVEAMNLIDTLERLGISYHFEKEIDQKLKHFFNLNKDYSDESYDLYTVSLHFRLFRQHGHRISSDIFGRWIDESGKFKEGLKTDGKGLLSLYEASYLRTRGETILDDALEFATATLNSIAPHLESPLSKQVVHALIQPLHYGNPRIEAHNFISIYEENQDKNEFLLRFAKLDYNLLQMLHKEELNEVSRWWKELDLVSKLPYARDRVVECFFWAMGVYHEPQYSRARIMLTKTITMTSIIDDTYDAYGVIEELDIFTEAIERWNMEEMKKLPEYIQPFYKALLELYEQFEEELAEEGRSYAAHYAIESLKELVRSYHVEAKWFIQGYLPPFEEYLKNALITCTYCYHTTTSLLGVESAVEEDFEWLANKPKMLVAGLLICRVIDDIATYEVEKERGQSATGIESYMRDNNATIEEAVAKFFEIATDAWKDINEECLMPSPYSRDVLMRILNLERIIDVTYKGNEDGYTQPEKVLKPHIIALFVDPIKM.

Residues D299, D303, D442, T446, and E450 each coordinate Mg(2+). The short motif at 299-303 (DDTYD) is the DDXXD motif element.

Belongs to the terpene synthase family. Tpsa subfamily. Monomer. It depends on Mg(2+) as a cofactor. Highly expressed in leaves and at lower levels in flowers.

It carries out the reaction (2E,6E)-farnesyl diphosphate = (-)-5-epi-eremophilene + diphosphate. It participates in secondary metabolite biosynthesis; terpenoid biosynthesis. Functionally, sesquiterpene synthase that catalyzes the conversion of farnesyl diphosphate to (-)-5-epi-eremophilene. The chain is (-)-5-epieremophilene synthase STPS1 from Salvia miltiorrhiza (Chinese sage).